The following is a 778-amino-acid chain: Ubiquitin thioesterase trabid (778 aa).

2 RanBP2-type zinc fingers span residues 5-36 and 89-118; these read KDDA…SKPL and DSEK…KRGG. Residues 187–197 are compositionally biased toward polar residues; the sequence is ASHNQSQSQHR. Residues 187–226 form a disordered region; it reads ASHNQSQSQHRQPVLQQQMQLQLQPQQQRESSSSAAVPPQ. The span at 198-226 shows a compositional bias: low complexity; it reads QPVLQQQMQLQLQPQQQRESSSSAAVPPQ. The segment at 232 to 261 adopts a RanBP2-type 3 zinc-finger fold; sequence YVSKWACNSCTYENWPRSIKCSMCGKTRER. The segment at 265-290 is disordered; it reads GSQNDLHASSSLNSQEENQQQLQQPN. A compositionally biased stretch (low complexity) spans 273-288; sequence SSSLNSQEENQQQLQQ. Residues 507–665 enclose the OTU domain; that stretch reads MFVLWNRSAG…RGHFSALVPM (159 aa). The active-site Nucleophile is the Cys518. His658 (proton acceptor) is an active-site residue. Ser770, Ser771, and Ser775 each carry phosphoserine.

This sequence belongs to the peptidase C64 family. Interacts with Apc.

The enzyme catalyses Thiol-dependent hydrolysis of ester, thioester, amide, peptide and isopeptide bonds formed by the C-terminal Gly of ubiquitin (a 76-residue protein attached to proteins as an intracellular targeting signal).. Its function is as follows. Positive regulator of the Wnt signaling pathway. Specifically cleaves 'Lys-63'-linked ubiquitin chains. May act by deubiquitinating APC protein, a negative regulator of Wnt-mediated transcription. Required for an efficient wg response, but not for other signaling responses, in the eye. This is Ubiquitin thioesterase trabid (trbd) from Drosophila melanogaster (Fruit fly).